We begin with the raw amino-acid sequence, 450 residues long: Tryptophan dimethylallyltransferase 2 (450 aa).

Residues Ile-80–Leu-81 and Glu-89 each bind L-tryptophan. Substrate contacts are provided by Arg-100, Lys-186, and Tyr-188. 2 residues coordinate L-tryptophan: Tyr-190 and Arg-251. Substrate is bound by residues Arg-264, Lys-266, Tyr-268, Gln-350, Tyr-352, Tyr-416, and Tyr-420.

It belongs to the tryptophan dimethylallyltransferase family. As to quaternary structure, homodimer.

It catalyses the reaction L-tryptophan + dimethylallyl diphosphate = 4-(3-methylbut-2-enyl)-L-tryptophan + diphosphate. Its pathway is alkaloid biosynthesis; ergot alkaloid biosynthesis. In terms of biological role, catalyzes the first step of ergot alkaloid biosynthesis. Ergot alkaloids, which are produced by endophyte fungi, can enhance plant host fitness, but also cause livestock toxicosis to host plants. This chain is Tryptophan dimethylallyltransferase 2 (dmaW2), found in Epichloe coenophiala (Tall fescue endophyte fungus).